The chain runs to 71 residues: Cruzioseptin-2 (71 aa).

Residues 1-22 (MAFLKKSLFLVLFLGLVSLSIC) form the signal peptide. A propeptide spanning residues 23–43 (EEEKREEENEEVQEDDDQSEE) is cleaved from the precursor. Gln-68 is modified (glutamine amide). Residues 70–71 (EQ) constitute a propeptide that is removed on maturation.

As to expression, expressed by the skin glands.

The protein localises to the secreted. Functionally, has antimicrobial activity against Gram-negative bacterium E.coli (MIC=26.35 uM), against Gram-positive bacterium S.aureus (MIC=6.59 uM) and against fungus C.albicans (MIC=13.18 uM). At higher concentrations also has a bactericidal and fungicidal effect. Has hemagglutinating activity against horse erythrocytes. In Cruziohyla calcarifer (Splendid leaf frog), this protein is Cruzioseptin-2.